A 297-amino-acid polypeptide reads, in one-letter code: MDCQENEYWDQWGRCVTCQRCGPGQELSKDCGYGEGGDAYCTACPPRRYKSSWGHHRCQSCITCAVINRVQKVNCTATSNAVCGDCLPRFYRKTRIGGLQDQECIPCTKQTPTSEVQCAFQLSLVEADTPTVPPQEATLVALVSSLLVVFTLAFLGLFFLYCKQFFNRHCQRGGLLQFEADKTAKEESLFPVPPSKETSAESQVSENIFQTQPLNPILEDDCSSTSGFPTQESFTMASCTSESHSHWVHSPIECTELDLQKFSSSASYTGAETLGGNTVESTGDRLELNVPFEVPSP.

At 1-138 (MDCQENEYWD…TPTVPPQEAT (138 aa)) the chain is on the extracellular side. TNFR-Cys repeat units follow at residues 2–41 (DCQENEYWDQWGRCVTCQRCGPGQELSKDCGYGEGGDAYC), 43–83 (ACPP…NAVC), and 85–118 (DCLPRFYRKTRIGGLQDQECIPCTKQTPTSEVQC). 8 disulfide bridges follow: C3/C15, C18/C31, C21/C41, C44/C58, C61/C75, C64/C83, C86/C104, and C107/C118. An N-linked (GlcNAc...) asparagine glycan is attached at N74. The helical; Signal-anchor for type III membrane protein transmembrane segment at 139–159 (LVALVSSLLVVFTLAFLGLFF) threads the bilayer. Topologically, residues 160 to 297 (LYCKQFFNRH…LNVPFEVPSP (138 aa)) are cytoplasmic. Positions 272-281 (ETLGGNTVES) are enriched in polar residues. The interval 272 to 297 (ETLGGNTVESTGDRLELNVPFEVPSP) is disordered.

Associates with TRAF1, TRAF3 and TRAF6.

It is found in the membrane. Functionally, receptor for EDA isoform A2, but not for EDA isoform A1. Mediates the activation of the NF-kappa-B and JNK pathways. Activation seems to be mediated by binding to TRAF3 and TRAF6. The polypeptide is Tumor necrosis factor receptor superfamily member 27 (EDA2R) (Homo sapiens (Human)).